We begin with the raw amino-acid sequence, 467 residues long: Glycogen synthase (467 aa).

Residue lysine 15 coordinates ADP-alpha-D-glucose.

Belongs to the glycosyltransferase 1 family. Bacterial/plant glycogen synthase subfamily.

The catalysed reaction is [(1-&gt;4)-alpha-D-glucosyl](n) + ADP-alpha-D-glucose = [(1-&gt;4)-alpha-D-glucosyl](n+1) + ADP + H(+). It participates in glycan biosynthesis; glycogen biosynthesis. In terms of biological role, synthesizes alpha-1,4-glucan chains using ADP-glucose. The protein is Glycogen synthase of Desulfitobacterium hafniense (strain DSM 10664 / DCB-2).